Consider the following 104-residue polypeptide: Replication restart protein PriB (104 aa).

Residues 1–101 enclose the SSB domain; the sequence is MTNRLALSGT…LHAEQIELID (101 aa).

Belongs to the PriB family. As to quaternary structure, homodimer. Interacts with PriA and DnaT. Component of the replication restart primosome. Primosome assembly occurs via a 'hand-off' mechanism. PriA binds to replication forks, subsequently PriB then DnaT bind; DnaT then displaces ssDNA to generate the helicase loading substrate.

In terms of biological role, involved in the restart of stalled replication forks, which reloads the replicative helicase on sites other than the origin of replication; the PriA-PriB pathway is the major replication restart pathway. During primosome assembly it facilitates complex formation between PriA and DnaT on DNA; stabilizes PriA on DNA. Stimulates the DNA unwinding activity of PriA helicase. In Citrobacter koseri (strain ATCC BAA-895 / CDC 4225-83 / SGSC4696), this protein is Replication restart protein PriB.